Consider the following 77-residue polypeptide: Cysteine-rich protein 1 (77 aa).

Residues 2 to 63 (PKCPKCSKEV…HPCYAAMFGP (62 aa)) form the LIM zinc-binding domain. 2 positions are modified to N6-acetyllysine: Lys-9 and Lys-22. Arg-68 is modified (omega-N-methylarginine).

Seems to have a role in zinc absorption and may function as an intracellular zinc transport protein. The polypeptide is Cysteine-rich protein 1 (CRIP1) (Bos taurus (Bovine)).